Here is a 492-residue protein sequence, read N- to C-terminus: Ammonium transporter MEP1 (492 aa).

Residues 1 to 18 (MESRTTGPLTTETYDGPT) are Extracellular-facing. Residues 19-39 (VAFMILGAALVFFMVPGLGFL) traverse the membrane as a helical segment. At 40 to 49 (YSGLARRKSA) the chain is on the cytoplasmic side. Residues 50–70 (LALIWVVLMATLVGILQWYFW) traverse the membrane as a helical segment. The Extracellular portion of the chain corresponds to 71–109 (GYSLAFSKSAPNNKFIGNLDSFGFRNVYGKKFDEDAYPE). The helical transmembrane segment at 110–130 (LAYATFQMMFSCVNLSIIAGA) threads the bilayer. Topologically, residues 131–140 (TAERGRLLPH) are cytoplasmic. Residues 141–161 (MVFLFILATIGYCPVTYWIWS) form a helical membrane-spanning segment. Topologically, residues 162-174 (PGGWAYQWGVLDW) are extracellular. The chain crosses the membrane as a helical span at residues 175–195 (AGGGNIEILSAVSGFVYSWFL). Topologically, residues 196–210 (GKRNEKLLINFRPHN) are cytoplasmic. The chain crosses the membrane as a helical span at residues 211–231 (VSLVTLGTSILWFGWLLFNSA). Over 232–240 (SSLSPNLRS) the chain is Extracellular. Residues 241–261 (VYAFMNTCLSAITGGMTWCLL) form a helical membrane-spanning segment. Topologically, residues 262–268 (DYRSEKK) are cytoplasmic. The helical transmembrane segment at 269–289 (WSTVGLCSGIISGLVAATPSS) threads the bilayer. Position 290 (Gly-290) is a topological domain, extracellular. Residues 291–311 (CITLYGSLIQGIVAGVVCNFA) form a helical membrane-spanning segment. Residues 312 to 331 (TKLKYYAKVDDAMDILAEHG) are Cytoplasmic-facing. A helical transmembrane segment spans residues 332-352 (VAGVIGLIFNALFGADWVIGM). Residues 353-373 (DGTTEHEGGWVTHNYKQMYKQ) lie on the Extracellular side of the membrane. Residues 374 to 394 (IAYIAASIGYTAAVTAIICFV) traverse the membrane as a helical segment. Over 395–492 (LGYIPGMRLR…PIHQEDPANR (98 aa)) the chain is Cytoplasmic. Residues Ser-442 and Ser-445 each carry the phosphoserine modification. Positions 455-492 (HLAAERSSSGTNSSSDGNGEMIQSEKILPIHQEDPANR) are disordered. The span at 461–473 (SSSGTNSSSDGNG) shows a compositional bias: low complexity.

The protein belongs to the ammonia transporter channel (TC 1.A.11.2) family.

It is found in the membrane. In terms of biological role, transporter for ammonium (both charged and uncharged NH3 and NH4) to use as a nitrogen source. Can also transport methylamine. The affinity of MEP1 is about twenty times lower than that of MEP2. MEP3 has the lowest affinity. The protein is Ammonium transporter MEP1 (MEP1) of Saccharomyces cerevisiae (strain ATCC 204508 / S288c) (Baker's yeast).